A 260-amino-acid chain; its full sequence is Indole-3-glycerol phosphate synthase (260 aa).

It belongs to the TrpC family.

The enzyme catalyses 1-(2-carboxyphenylamino)-1-deoxy-D-ribulose 5-phosphate + H(+) = (1S,2R)-1-C-(indol-3-yl)glycerol 3-phosphate + CO2 + H2O. It participates in amino-acid biosynthesis; L-tryptophan biosynthesis; L-tryptophan from chorismate: step 4/5. The protein is Indole-3-glycerol phosphate synthase of Desulfotalea psychrophila (strain LSv54 / DSM 12343).